The chain runs to 97 residues: MKRICSIYKSPRKNEMYLYVLKSEALERVPENLLLAFGKPQHAFDLVLSPERKLSREDIHQVLENLDKQGYHLQMPPAEDEYIEHLPEELLRRNDPV.

In terms of domain architecture, YcgL spans 3 to 87 (RICSIYKSPR…AEDEYIEHLP (85 aa)).

This Pseudomonas fluorescens (strain ATCC BAA-477 / NRRL B-23932 / Pf-5) protein is YcgL domain-containing protein PFL_1496.